The chain runs to 233 residues: Large ribosomal subunit protein uL1 (233 aa).

It belongs to the universal ribosomal protein uL1 family. As to quaternary structure, part of the 50S ribosomal subunit.

Binds directly to 23S rRNA. The L1 stalk is quite mobile in the ribosome, and is involved in E site tRNA release. Its function is as follows. Protein L1 is also a translational repressor protein, it controls the translation of the L11 operon by binding to its mRNA. The sequence is that of Large ribosomal subunit protein uL1 from Brucella anthropi (strain ATCC 49188 / DSM 6882 / CCUG 24695 / JCM 21032 / LMG 3331 / NBRC 15819 / NCTC 12168 / Alc 37) (Ochrobactrum anthropi).